The chain runs to 207 residues: MANYDVLKVDGSKAGSVELSDSVFAIEPNKDVIFEAINLQRASLRQGTHSVKNRSAVRGGGRKPWRQKGTGRARQGTIRAPQWRGGGIVFGPTPRSYSYKMPKKMRRLALRSALSFKVQENGFTVVDAFGLEAPKTKEFTKVLSNLELPKKVLVVTESEDVNVELSARNIPGVQITTVTGLNVLDITSADSVLITEAAAKKVEEVLG.

A disordered region spans residues Thr48–Gln75. The segment covering Gly60–Gly71 has biased composition (basic residues).

Belongs to the universal ribosomal protein uL4 family. As to quaternary structure, part of the 50S ribosomal subunit.

In terms of biological role, one of the primary rRNA binding proteins, this protein initially binds near the 5'-end of the 23S rRNA. It is important during the early stages of 50S assembly. It makes multiple contacts with different domains of the 23S rRNA in the assembled 50S subunit and ribosome. Forms part of the polypeptide exit tunnel. This is Large ribosomal subunit protein uL4 from Staphylococcus carnosus (strain TM300).